The primary structure comprises 129 residues: Dynein 14 kDa light chain, flagellar outer arm (129 aa).

Residues 2 to 109 (AFITEIANEA…LNRIVTELSG (108 aa)) enclose the Thioredoxin domain. Cysteine 34 and cysteine 37 form a disulfide bridge. The segment at 107-129 (LSGKNPPPAAPAAAPAAPAAEAS) is disordered. A compositionally biased stretch (low complexity) spans 117-129 (PAAAPAAPAAEAS).

In terms of assembly, consists of at least 3 heavy chains (alpha, beta and gamma), 2 intermediate chains and 8 light chains.

It localises to the cell projection. Its subcellular location is the cilium. The protein resides in the flagellum. It is found in the cytoplasm. The protein localises to the cytoskeleton. It localises to the flagellum axoneme. Functionally, may be involved in regulating the redox state of functionally important thiol groups within dynein. This is Dynein 14 kDa light chain, flagellar outer arm from Chlamydomonas reinhardtii (Chlamydomonas smithii).